The sequence spans 244 residues: Probable transcriptional regulatory protein DMR_30850 (244 aa).

Belongs to the TACO1 family.

The protein resides in the cytoplasm. In Solidesulfovibrio magneticus (strain ATCC 700980 / DSM 13731 / RS-1) (Desulfovibrio magneticus), this protein is Probable transcriptional regulatory protein DMR_30850.